Consider the following 589-residue polypeptide: Phosphoenolpyruvate carboxykinase [GTP] (589 aa).

Substrate contacts are provided by residues arginine 75 and 207–209; that span reads YGG. The Mn(2+) site is built by lysine 216 and histidine 236. Serine 258 serves as a coordination point for substrate. 259–264 contributes to the GTP binding site; that stretch reads ASGKTN. Serine 260 is an active-site residue. Aspartate 287 serves as a coordination point for Mn(2+). 374-376 contributes to the substrate binding site; it reads NSR. GTP contacts are provided by residues arginine 376, arginine 407, and 500–503; that span reads FAEN.

The protein belongs to the phosphoenolpyruvate carboxykinase [GTP] family. It depends on Mn(2+) as a cofactor.

Its subcellular location is the cytoplasm. It carries out the reaction oxaloacetate + GTP = phosphoenolpyruvate + GDP + CO2. It functions in the pathway carbohydrate biosynthesis; gluconeogenesis. Catalyzes the conversion of oxaloacetate (OAA) to phosphoenolpyruvate (PEP), the rate-limiting step in the metabolic pathway that produces glucose from lactate and other precursors derived from the citric acid cycle. In Thermoplasma volcanium (strain ATCC 51530 / DSM 4299 / JCM 9571 / NBRC 15438 / GSS1), this protein is Phosphoenolpyruvate carboxykinase [GTP].